Reading from the N-terminus, the 298-residue chain is Oxygen-dependent coproporphyrinogen-III oxidase (298 aa).

Ser-90 provides a ligand contact to substrate. Residues His-94 and His-104 each contribute to the a divalent metal cation site. His-104 acts as the Proton donor in catalysis. 106–108 contributes to the substrate binding site; that stretch reads NVR. Residues His-143 and His-173 each coordinate a divalent metal cation. Residues 238-273 form an important for dimerization region; that stretch reads YVEFNLVWDRGTLFGLQSGGRTESILMSLPPIVKWR. A substrate-binding site is contributed by 256-258; sequence GGR.

The protein belongs to the aerobic coproporphyrinogen-III oxidase family. Homodimer. The cofactor is a divalent metal cation.

It localises to the cytoplasm. The enzyme catalyses coproporphyrinogen III + O2 + 2 H(+) = protoporphyrinogen IX + 2 CO2 + 2 H2O. It participates in porphyrin-containing compound metabolism; protoporphyrin-IX biosynthesis; protoporphyrinogen-IX from coproporphyrinogen-III (O2 route): step 1/1. Functionally, involved in the heme biosynthesis. Catalyzes the aerobic oxidative decarboxylation of propionate groups of rings A and B of coproporphyrinogen-III to yield the vinyl groups in protoporphyrinogen-IX. The protein is Oxygen-dependent coproporphyrinogen-III oxidase of Dechloromonas aromatica (strain RCB).